A 414-amino-acid polypeptide reads, in one-letter code: Imidazolonepropionase (414 aa).

2 residues coordinate Fe(3+): histidine 77 and histidine 79. The Zn(2+) site is built by histidine 77 and histidine 79. Arginine 86, tyrosine 149, and histidine 184 together coordinate 4-imidazolone-5-propanoate. Residue tyrosine 149 coordinates N-formimidoyl-L-glutamate. Histidine 249 contacts Fe(3+). Histidine 249 provides a ligand contact to Zn(2+). Glutamate 252 is a 4-imidazolone-5-propanoate binding site. Residue aspartate 323 coordinates Fe(3+). Residue aspartate 323 participates in Zn(2+) binding. Asparagine 325 and glycine 327 together coordinate N-formimidoyl-L-glutamate. Residue serine 328 coordinates 4-imidazolone-5-propanoate.

It belongs to the metallo-dependent hydrolases superfamily. HutI family. Requires Zn(2+) as cofactor. It depends on Fe(3+) as a cofactor.

Its subcellular location is the cytoplasm. It carries out the reaction 4-imidazolone-5-propanoate + H2O = N-formimidoyl-L-glutamate. It functions in the pathway amino-acid degradation; L-histidine degradation into L-glutamate; N-formimidoyl-L-glutamate from L-histidine: step 3/3. Its function is as follows. Catalyzes the hydrolytic cleavage of the carbon-nitrogen bond in imidazolone-5-propanoate to yield N-formimidoyl-L-glutamate. It is the third step in the universal histidine degradation pathway. This chain is Imidazolonepropionase, found in Phocaeicola vulgatus (strain ATCC 8482 / DSM 1447 / JCM 5826 / CCUG 4940 / NBRC 14291 / NCTC 11154) (Bacteroides vulgatus).